The sequence spans 241 residues: Small ribosomal subunit protein uS2 (241 aa).

The protein belongs to the universal ribosomal protein uS2 family.

The chain is Small ribosomal subunit protein uS2 from Salmonella choleraesuis (strain SC-B67).